A 586-amino-acid polypeptide reads, in one-letter code: Solute carrier family 13 member 2 (586 aa).

Helical transmembrane passes span 13-33 (SYLI…IVQT), 53-73 (ALPL…MGIM), and 86-106 (TNIL…WNLH). A compositionally biased stretch (polar residues) spans 165 to 175 (DVEEGNSNPSF). Residues 165-209 (DVEEGNSNPSFELQEASPQKEETKLDNGQAVSVSSEPRAQKTKEH) are disordered. A run of 9 helical transmembrane segments spans residues 215–235 (GLSL…LTGT), 264–284 (FAFP…QVLF), 319–339 (PMSF…VLWF), 366–386 (GTVA…IPGL), 407–427 (TVND…FALA), 445–465 (PLQH…VAIF), 478–498 (FLPI…YVML), 506–526 (LAFM…FGGL), and 535–555 (GFLL…SWSI).

The protein belongs to the SLC13A/DASS transporter (TC 2.A.47) family. NADC subfamily. As to expression, highly expressed in kidney and small intestine. Not detectable in brain, heart, stomach and skeletal muscle.

The protein resides in the apical cell membrane. The catalysed reaction is succinate(out) + 3 Na(+)(out) = succinate(in) + 3 Na(+)(in). The enzyme catalyses fumarate(out) + 3 Na(+)(out) = fumarate(in) + 3 Na(+)(in). It carries out the reaction 2-oxoglutarate(out) + 3 Na(+)(out) = 2-oxoglutarate(in) + 3 Na(+)(in). Its activity is regulated as follows. Li(+) decreases succinate transport in the presence of Na(+), by competing at one of the three cation binding sites. In terms of biological role, low-affinity sodium-dicarboxylate cotransporter, that mediates the entry of citric acid cycle intermediates, such as succinate, citrate, fumarate and alpha-ketoglutarate (2-oxoglutarate) into the small intestine and renal proximal tubule. Can transport citrate in a Na(+)-dependent manner, recognizing the divalent form of citrate rather than the trivalent form which is normally found in blood. Transports the dicarboxylate into the cell with a probable stoichiometry of 3 Na(+) for 1 divalent dicarboxylate, rendering the process electrogenic. Has a critical role in renal dicarboxylate transport. This is Solute carrier family 13 member 2 (Slc13a2) from Mus musculus (Mouse).